Consider the following 441-residue polypeptide: Cysteine proteinase (441 aa).

Cysteine 249 and cysteine 290 form a disulfide bridge. Cysteine 252 is a catalytic residue. Residues asparagine 270 and asparagine 345 are each glycosylated (N-linked (GlcNAc...) asparagine). Residues histidine 381 and asparagine 403 contribute to the active site.

It belongs to the peptidase C1 family.

The sequence is that of Cysteine proteinase (TACP) from Theileria annulata.